The sequence spans 351 residues: Ribosomal RNA small subunit methyltransferase H (351 aa).

Residues 48 to 50 (GGY), D67, F94, D115, and Q122 each bind S-adenosyl-L-methionine. The disordered stretch occupies residues 274 to 351 (AAQASRHVPG…PAPQGRGPRR (78 aa)).

Belongs to the methyltransferase superfamily. RsmH family.

The protein localises to the cytoplasm. It catalyses the reaction cytidine(1402) in 16S rRNA + S-adenosyl-L-methionine = N(4)-methylcytidine(1402) in 16S rRNA + S-adenosyl-L-homocysteine + H(+). Its function is as follows. Specifically methylates the N4 position of cytidine in position 1402 (C1402) of 16S rRNA. This chain is Ribosomal RNA small subunit methyltransferase H, found in Methylorubrum extorquens (strain ATCC 14718 / DSM 1338 / JCM 2805 / NCIMB 9133 / AM1) (Methylobacterium extorquens).